Consider the following 419-residue polypeptide: Acyl-[acyl-carrier-protein] hydrolase FATB1, chloroplastic (419 aa).

The transit peptide at 1 to 50 (MVAAAATSAFFPVPAPGTSPKPGKSGNWPSSLSPTFKPKSIPNGGFQVKA) directs the protein to the chloroplast. The segment at 1–84 (MVAAAATSAF…DTSSSPPPRA (84 aa)) is disordered. Positions 61–78 (SAVNLKSGSLNTQEDTSS) are enriched in polar residues. Residues Asn315, His317, and Cys352 contribute to the active site. The disordered stretch occupies residues 390-419 (SRTEWRPKNAGTNGAISTSTAKTSNGNSVS). Positions 399–419 (AGTNGAISTSTAKTSNGNSVS) are enriched in polar residues.

It belongs to the acyl-ACP thioesterase family.

The protein localises to the plastid. Its subcellular location is the chloroplast. It carries out the reaction octanoyl-[ACP] + H2O = octanoate + holo-[ACP] + H(+). It catalyses the reaction decanoyl-[ACP] + H2O = decanoate + holo-[ACP] + H(+). Plays an essential role in chain termination during de novo fatty acid synthesis. Possesses thioesterase activity for short chain acyl-ACPs. Substrate preference is 8:0 &gt; 10:0. In Cuphea viscosissima (Blue waxweed), this protein is Acyl-[acyl-carrier-protein] hydrolase FATB1, chloroplastic.